We begin with the raw amino-acid sequence, 147 residues long: uncharacterized protein (147 aa).

Transmembrane regions (helical) follow at residues L21–V41 and A67–L87.

It is found in the cell membrane. This is an uncharacterized protein from Ureaplasma parvum serovar 3 (strain ATCC 700970).